Consider the following 95-residue polypeptide: Small ribosomal subunit protein bS20 (95 aa).

It belongs to the bacterial ribosomal protein bS20 family.

Its function is as follows. Binds directly to 16S ribosomal RNA. The sequence is that of Small ribosomal subunit protein bS20 from Ehrlichia chaffeensis (strain ATCC CRL-10679 / Arkansas).